The following is a 634-amino-acid chain: Chaperone protein HtpG (634 aa).

Residues 1 to 345 form an a; substrate-binding region; sequence MEHQQNHTFS…SNDLPLNVSR (345 aa). The interval 346 to 562 is b; it reads EILQDTRVTA…NDDMSTQMAK (217 aa). The interval 563-634 is c; sequence LMAQMGQPVP…VGRINKLLLA (72 aa).

The protein belongs to the heat shock protein 90 family. As to quaternary structure, homodimer.

The protein resides in the cytoplasm. Functionally, molecular chaperone. Has ATPase activity. This is Chaperone protein HtpG from Psychromonas ingrahamii (strain DSM 17664 / CCUG 51855 / 37).